Here is a 74-residue protein sequence, read N- to C-terminus: MIQPQTRLNVADNSGARELMCIRIIGASNRRYAHIGDIIVARRNPKGTRVFGAIAHELRELSFTKIVSLAPEVL.

It belongs to the universal ribosomal protein uL14 family. In terms of assembly, part of the 50S ribosomal subunit.

The protein resides in the plastid. It localises to the chloroplast. Functionally, binds to 23S rRNA. The protein is Large ribosomal subunit protein uL14c (rpl14) of Oenothera ammophila (Evening primerose).